Consider the following 292-residue polypeptide: NAD kinase (292 aa).

D73 serves as the catalytic Proton acceptor. NAD(+) contacts are provided by residues 73 to 74 (DG), 147 to 148 (NE), H158, R175, D177, 188 to 193 (TAYSLS), and Q247.

This sequence belongs to the NAD kinase family. The cofactor is a divalent metal cation.

It is found in the cytoplasm. The catalysed reaction is NAD(+) + ATP = ADP + NADP(+) + H(+). Its function is as follows. Involved in the regulation of the intracellular balance of NAD and NADP, and is a key enzyme in the biosynthesis of NADP. Catalyzes specifically the phosphorylation on 2'-hydroxyl of the adenosine moiety of NAD to yield NADP. This chain is NAD kinase, found in Edwardsiella ictaluri (strain 93-146).